Consider the following 379-residue polypeptide: Succinate--CoA ligase [ADP-forming] subunit beta (379 aa).

One can recognise an ATP-grasp domain in the interval 9-236 (KEIARKYGIE…GRDATPYEKV (228 aa)). ATP contacts are provided by residues Lys-46, 53-55 (GRG), Glu-92, Val-95, and Glu-100. Asn-192 and Asp-206 together coordinate Mg(2+). Residues Asn-256 and 313-315 (GIT) each bind substrate.

This sequence belongs to the succinate/malate CoA ligase beta subunit family. In terms of assembly, heterotetramer of two alpha and two beta subunits. Mg(2+) is required as a cofactor.

The catalysed reaction is succinate + ATP + CoA = succinyl-CoA + ADP + phosphate. It carries out the reaction GTP + succinate + CoA = succinyl-CoA + GDP + phosphate. Its pathway is carbohydrate metabolism; tricarboxylic acid cycle; succinate from succinyl-CoA (ligase route): step 1/1. Its function is as follows. Succinyl-CoA synthetase functions in the citric acid cycle (TCA), coupling the hydrolysis of succinyl-CoA to the synthesis of either ATP or GTP and thus represents the only step of substrate-level phosphorylation in the TCA. The beta subunit provides nucleotide specificity of the enzyme and binds the substrate succinate, while the binding sites for coenzyme A and phosphate are found in the alpha subunit. In Desulfurococcus amylolyticus (strain DSM 18924 / JCM 16383 / VKM B-2413 / 1221n) (Desulfurococcus kamchatkensis), this protein is Succinate--CoA ligase [ADP-forming] subunit beta.